Here is a 230-residue protein sequence, read N- to C-terminus: Cytidylate kinase (230 aa).

12-20 (GPSGAGKGT) is a binding site for ATP.

Belongs to the cytidylate kinase family. Type 1 subfamily.

The protein localises to the cytoplasm. The catalysed reaction is CMP + ATP = CDP + ADP. It carries out the reaction dCMP + ATP = dCDP + ADP. The chain is Cytidylate kinase from Shewanella sediminis (strain HAW-EB3).